Here is a 498-residue protein sequence, read N- to C-terminus: Early growth response protein 1 (498 aa).

Disordered stretches follow at residues 137–203 (NASP…TASI) and 287–308 (PSRMRKYPNRPSKTPPHERPYA). A compositionally biased stretch (low complexity) spans 139–163 (SPSSAPSSSPSSSSSSSQSPPLSCS). A compositionally biased stretch (polar residues) spans 179–202 (FPNSSPELFPDQSPQPFQNASTAS). C2H2-type zinc fingers lie at residues 307 to 331 (YACPVESCDRRFSRSDELTRHIRIH), 337 to 359 (FQCRICMRNFSRSDHLTTHIRTH), and 365 to 387 (FACDICGRKFARSDERKRHTKIH). Positions 378–422 (DERKRHTKIHLRQKDKKADKATPVSVASPVSSYSPSASTSYPSPV) are disordered. A compositionally biased stretch (basic residues) spans 382-392 (RHTKIHLRQKD). The span at 398-422 (ATPVSVASPVSSYSPSASTSYPSPV) shows a compositional bias: low complexity.

This sequence belongs to the EGR C2H2-type zinc-finger protein family.

It localises to the nucleus. It is found in the cytoplasm. Functionally, transcriptional regulator. Recognizes and binds to the DNA sequence 5'-GCG(T/G)GGGCG-3'(EGR-site) in the promoter region of target genes. Binds double-stranded target DNA, irrespective of the cytosine methylation status. Regulates the transcription of numerous target genes, and thereby plays an important role in regulating the response to growth factors, DNA damage, and ischemia. Plays a role in the regulation of cell survival, proliferation and cell death. Mediates responses to ischemia and hypoxia; regulates the expression of proteins that are involved in inflammatory processes. Plays a role in regulating the expression of circadian clock genes. In Xenopus tropicalis (Western clawed frog), this protein is Early growth response protein 1.